Reading from the N-terminus, the 373-residue chain is uncharacterized protein (373 aa).

This is an uncharacterized protein from Saccharomyces cerevisiae (strain ATCC 204508 / S288c) (Baker's yeast).